A 191-amino-acid chain; its full sequence is Large ribosomal subunit protein uL5 (191 aa).

The protein belongs to the universal ribosomal protein uL5 family. In terms of assembly, part of the 50S ribosomal subunit; part of the 5S rRNA/L5/L18/L25 subcomplex. Contacts the 5S rRNA and the P site tRNA. Forms a bridge to the 30S subunit in the 70S ribosome.

Its function is as follows. This is one of the proteins that bind and probably mediate the attachment of the 5S RNA into the large ribosomal subunit, where it forms part of the central protuberance. In the 70S ribosome it contacts protein S13 of the 30S subunit (bridge B1b), connecting the 2 subunits; this bridge is implicated in subunit movement. Contacts the P site tRNA; the 5S rRNA and some of its associated proteins might help stabilize positioning of ribosome-bound tRNAs. In Thermobifida fusca (strain YX), this protein is Large ribosomal subunit protein uL5.